The sequence spans 235 residues: Large ribosomal subunit protein uL1 (235 aa).

This sequence belongs to the universal ribosomal protein uL1 family. Part of the 50S ribosomal subunit.

In terms of biological role, binds directly to 23S rRNA. The L1 stalk is quite mobile in the ribosome, and is involved in E site tRNA release. Functionally, protein L1 is also a translational repressor protein, it controls the translation of the L11 operon by binding to its mRNA. In Citrobacter koseri (strain ATCC BAA-895 / CDC 4225-83 / SGSC4696), this protein is Large ribosomal subunit protein uL1.